Consider the following 553-residue polypeptide: Tether containing UBX domain for GLUT4 (553 aa).

Ala2 carries the N-acetylalanine modification. Residues 182 to 202 show a composition bias toward low complexity; it reads PGSLGSSASAGQAAASAPLPL. The tract at residues 182–324 is disordered; that stretch reads PGSLGSSASA…REPVDREPVV (143 aa). Ser184 bears the Phosphoserine mark. Basic and acidic residues predominate over residues 206-217; sequence ELSRGDLSRPED. Over residues 260 to 280 the composition is skewed to low complexity; that stretch reads RPLTSSSAKLPKSLSSPGGPS. At Ser275 the chain carries Phosphoserine. A compositionally biased stretch (basic and acidic residues) spans 296 to 324; it reads EQERERDPQQEQERERPVDREPVDREPVV. Positions 317 to 380 are interaction with GLUT4; the sequence is PVDREPVVCH…LVTKAFREAQ (64 aa). In terms of domain architecture, UBX spans 386–462; sequence ERYPKVALRV…NLFPAALVHL (77 aa). Residues 499 to 536 are disordered; it reads GSPSPLPAPDPAPKSEPAAEEGALVPPEPIPGTAQPVK. Phosphoserine is present on residues Ser500 and Ser502. The span at 502 to 512 shows a compositional bias: pro residues; the sequence is SPLPAPDPAPK.

Interacts with GLUT4. Interacts with VCPKMT. Interacts with VCP. As to expression, ubiquitous. Highly expressed in testis, heart, skeletal muscle and pancreas.

The protein resides in the endomembrane system. It is found in the endoplasmic reticulum-Golgi intermediate compartment membrane. The protein localises to the cytoplasm. It localises to the nucleus. Its function is as follows. Tethering protein that sequesters GLUT4-containing vesicles in the cytoplasm in the absence of insulin. Modulates the amount of GLUT4 that is available at the cell surface. Enhances VCP methylation catalyzed by VCPKMT. The sequence is that of Tether containing UBX domain for GLUT4 (ASPSCR1) from Homo sapiens (Human).